Here is a 341-residue protein sequence, read N- to C-terminus: MKNIGRLAVTALIAVFIFSVTGCNMIEKTPEAIAKSTVAEVNGEKITRSDLDKDPNTIQLITQVKQQYGENYKENEDAVNTIKTQKEQILDDLITNKVVAQKAKELKLLPDETKLKSDMETQIAQLKKQNFNDDAEQFNTALKAQGFTEESFKAMFLSQLRTQQTLEKVTESISKNIKITDKEIEDYYNTNKSKYTEQPNKMHLAHILVKTEDEAKKVKKRLDDGEDFAKVAKEVSQDTASKDNGGDLGTVNYDNSGYDADFMAGALALKEGAISAPVKSSFGYHIIKCIKKEEYPVKALSAVKDQIKTQLESDKKNSLVSQKIQEWKKASTITKKEKNII.

A signal peptide spans 1 to 22; that stretch reads MKNIGRLAVTALIAVFIFSVTG. Cys-23 carries N-palmitoyl cysteine lipidation. Residue Cys-23 is the site of S-diacylglycerol cysteine attachment. The PpiC domain occupies 199–291; that stretch reads PNKMHLAHIL…FGYHIIKCIK (93 aa).

Belongs to the PrsA family.

Its subcellular location is the cell membrane. The enzyme catalyses [protein]-peptidylproline (omega=180) = [protein]-peptidylproline (omega=0). Plays a major role in protein secretion by helping the post-translocational extracellular folding of several secreted proteins. This is Foldase protein PrsA from Clostridium kluyveri (strain NBRC 12016).